The following is a 328-amino-acid chain: Cytochrome c biogenesis protein CcsA (328 aa).

The next 8 membrane-spanning stretches (helical) occupy residues 13-33, 46-66, 73-93, 101-121, 146-166, 234-254, 263-283, and 295-315; these read ISFSVVSIVLIIYFLTLLVNL, GIIITFFGITGLLLTRWIFSG, LYESLIFLSWAFSIIHMVSYF, LNAITAPSAIFIQGFATSGLL, MILGYGALLCGSLLSIALLVI, IISLGFIFLTVGILSGAVWAN, WDPKETWAFITWTIFAIYLHI, and AIVASIGFLLIWICYFGVNLL.

Belongs to the CcmF/CycK/Ccl1/NrfE/CcsA family. May interact with Ccs1.

The protein localises to the plastid. The protein resides in the chloroplast thylakoid membrane. Its function is as follows. Required during biogenesis of c-type cytochromes (cytochrome c6 and cytochrome f) at the step of heme attachment. In Olimarabidopsis pumila (Dwarf rocket), this protein is Cytochrome c biogenesis protein CcsA.